We begin with the raw amino-acid sequence, 357 residues long: Alanine racemase, catabolic (357 aa).

Residue lysine 33 is the Proton acceptor; specific for D-alanine of the active site. Lysine 33 carries the N6-(pyridoxal phosphate)lysine modification. Arginine 129 provides a ligand contact to substrate. The active-site Proton acceptor; specific for L-alanine is the tyrosine 253. Substrate is bound at residue methionine 301.

This sequence belongs to the alanine racemase family. The cofactor is pyridoxal 5'-phosphate.

It carries out the reaction L-alanine = D-alanine. The protein operates within amino-acid biosynthesis; D-alanine biosynthesis; D-alanine from L-alanine: step 1/1. In terms of biological role, isomerizes L-alanine to D-alanine which is then likely oxidized to pyruvate by DadA. Shows racemase activity with both alanine stereoisomers, negligible activity with D-cysteine and L-serine, and exhibits no activity with the remaining natural chiral amino acids. This Pseudomonas putida (strain ATCC 47054 / DSM 6125 / CFBP 8728 / NCIMB 11950 / KT2440) protein is Alanine racemase, catabolic.